We begin with the raw amino-acid sequence, 137 residues long: Large ribosomal subunit protein uL16 (137 aa).

It belongs to the universal ribosomal protein uL16 family. In terms of assembly, part of the 50S ribosomal subunit.

Its function is as follows. Binds 23S rRNA and is also seen to make contacts with the A and possibly P site tRNAs. The protein is Large ribosomal subunit protein uL16 of Stutzerimonas stutzeri (strain A1501) (Pseudomonas stutzeri).